The primary structure comprises 228 residues: Octanoyltransferase (228 aa).

A BPL/LPL catalytic domain is found at 30–213 (NKVEDIMLLL…YFSRVFDFEP (184 aa)). Residues 75 to 82 (RGGDVTYH), 143 to 145 (AIG), and 156 to 158 (GFA) each bind substrate. Cys174 functions as the Acyl-thioester intermediate in the catalytic mechanism.

This sequence belongs to the LipB family.

Its subcellular location is the cytoplasm. It catalyses the reaction octanoyl-[ACP] + L-lysyl-[protein] = N(6)-octanoyl-L-lysyl-[protein] + holo-[ACP] + H(+). Its pathway is protein modification; protein lipoylation via endogenous pathway; protein N(6)-(lipoyl)lysine from octanoyl-[acyl-carrier-protein]: step 1/2. In terms of biological role, catalyzes the transfer of endogenously produced octanoic acid from octanoyl-acyl-carrier-protein onto the lipoyl domains of lipoate-dependent enzymes. Lipoyl-ACP can also act as a substrate although octanoyl-ACP is likely to be the physiological substrate. The sequence is that of Octanoyltransferase from Desulforamulus reducens (strain ATCC BAA-1160 / DSM 100696 / MI-1) (Desulfotomaculum reducens).